The chain runs to 319 residues: NADH-quinone oxidoreductase subunit H 2 (319 aa).

9 helical membrane passes run 1-21, 77-97, 107-127, 147-167, 179-199, 214-234, 238-258, 262-282, and 293-313; these read MIGM…LLVL, ILAP…VAIG, VGLL…VLGA, LAYE…AGSF, VWFV…GIAA, LIAG…FLGE, VLLV…GPWL, VWFG…RATL, and FAWK…GIVV.

Belongs to the complex I subunit 1 family. As to quaternary structure, NDH-1 is composed of 14 different subunits. Subunits NuoA, H, J, K, L, M, N constitute the membrane sector of the complex.

Its subcellular location is the cell inner membrane. The catalysed reaction is a quinone + NADH + 5 H(+)(in) = a quinol + NAD(+) + 4 H(+)(out). In terms of biological role, NDH-1 shuttles electrons from NADH, via FMN and iron-sulfur (Fe-S) centers, to quinones in the respiratory chain. The immediate electron acceptor for the enzyme in this species is believed to be ubiquinone. Couples the redox reaction to proton translocation (for every two electrons transferred, four hydrogen ions are translocated across the cytoplasmic membrane), and thus conserves the redox energy in a proton gradient. This subunit may bind ubiquinone. The chain is NADH-quinone oxidoreductase subunit H 2 from Rhodopseudomonas palustris (strain ATCC BAA-98 / CGA009).